The chain runs to 101 residues: Small ribosomal subunit protein uS14 (101 aa).

It belongs to the universal ribosomal protein uS14 family. Part of the 30S ribosomal subunit. Contacts proteins S3 and S10.

Binds 16S rRNA, required for the assembly of 30S particles and may also be responsible for determining the conformation of the 16S rRNA at the A site. This is Small ribosomal subunit protein uS14 from Ruegeria pomeroyi (strain ATCC 700808 / DSM 15171 / DSS-3) (Silicibacter pomeroyi).